The sequence spans 420 residues: Phosphoglycerate kinase, cytosolic (420 aa).

Residues Val-23, Asp-24, Phe-25, Asn-26, Arg-39, Ser-61, His-62, Gly-64, Arg-65, Arg-135, His-171, and Arg-172 each contribute to the (2R)-3-phosphoglycerate site. ADP is bound at residue Gly-217. Gly-217 serves as a coordination point for CDP. Lys-219 provides a ligand contact to (2R)-3-phosphoglycerate. Lys-219 contributes to the AMP binding site. Asp-222 is a CDP binding site. Asp-222 provides a ligand contact to Mg(2+). The ADP site is built by Lys-223 and Gly-241. Position 223 (Lys-223) interacts with AMP. Lys-223 contacts ATP. Gly-241 lines the CDP pocket. Residues Ala-242 and Ala-314 each coordinate AMP. Residues Ala-242 and Ala-314 each contribute to the ATP site. ADP contacts are provided by Ala-314 and Asn-338. Positions 339 and 344 each coordinate CDP. ADP is bound by residues Phe-344, Glu-345, Asp-377, and Ser-378. Glu-345 lines the AMP pocket. ATP contacts are provided by Glu-345, Asp-377, and Ser-378. Asp-377 contacts Mg(2+).

This sequence belongs to the phosphoglycerate kinase family. In terms of assembly, monomer. The cofactor is Mg(2+).

The protein resides in the cytoplasm. It catalyses the reaction (2R)-3-phosphoglycerate + ATP = (2R)-3-phospho-glyceroyl phosphate + ADP. Its pathway is carbohydrate degradation; glycolysis; pyruvate from D-glyceraldehyde 3-phosphate: step 2/5. This is Phosphoglycerate kinase, cytosolic (C1PGK) from Trypanosoma congolense.